The primary structure comprises 992 residues: Exportin-T (992 aa).

The protein belongs to the exportin family.

It localises to the nucleus. Its subcellular location is the cytoplasm. Its function is as follows. tRNA nucleus export receptor which facilitates tRNA translocation across the nuclear pore complex. Involved in pre-tRNA splicing, probably by affecting the interaction of pre-tRNA with splicing endonuclease. This chain is Exportin-T (LOS1), found in Scheffersomyces stipitis (strain ATCC 58785 / CBS 6054 / NBRC 10063 / NRRL Y-11545) (Yeast).